A 323-amino-acid polypeptide reads, in one-letter code: Putative dTDP-D-glucose 4,6-dehydratase (323 aa).

Position 124 (T124) interacts with substrate. D125 serves as the catalytic Proton donor. Catalysis depends on proton acceptor residues E126 and Y149.

It belongs to the NAD(P)-dependent epimerase/dehydratase family. dTDP-glucose dehydratase subfamily. Requires NAD(+) as cofactor.

The catalysed reaction is dTDP-alpha-D-glucose = dTDP-4-dehydro-6-deoxy-alpha-D-glucose + H2O. This chain is Putative dTDP-D-glucose 4,6-dehydratase, found in Acanthamoeba polyphaga mimivirus (APMV).